The chain runs to 117 residues: MAYSAMTKLALVVALCMVVSVPIAQAITCGQVSSNLAPCIPYVRGGGAVPPACCNGIRNVNNLARTTPDRQAACNCLKQLSASVPGVNPNNAAALPGKCGVNIPYQISPSTNCANVK.

The signal sequence occupies residues 1-26 (MAYSAMTKLALVVALCMVVSVPIAQA). 4 disulfide bridges follow: Cys29/Cys76, Cys39/Cys53, Cys54/Cys99, and Cys74/Cys113.

It belongs to the plant LTP family.

Plant non-specific lipid-transfer proteins transfer phospholipids as well as galactolipids across membranes. May play a role in wax or cutin deposition in the cell walls of expanding epidermal cells and certain secretory tissues. The protein is Non-specific lipid-transfer protein 1 of Prunus dulcis (Almond).